A 364-amino-acid polypeptide reads, in one-letter code: Methylthioribose-1-phosphate isomerase (364 aa).

Substrate contacts are provided by residues 49–51, Arg89, and Gln201; that span reads RGA. The Proton donor role is filled by Asp242. 252-253 is a substrate binding site; that stretch reads NK.

This sequence belongs to the eIF-2B alpha/beta/delta subunits family. MtnA subfamily.

The catalysed reaction is 5-(methylsulfanyl)-alpha-D-ribose 1-phosphate = 5-(methylsulfanyl)-D-ribulose 1-phosphate. Its pathway is amino-acid biosynthesis; L-methionine biosynthesis via salvage pathway; L-methionine from S-methyl-5-thio-alpha-D-ribose 1-phosphate: step 1/6. Functionally, catalyzes the interconversion of methylthioribose-1-phosphate (MTR-1-P) into methylthioribulose-1-phosphate (MTRu-1-P). The chain is Methylthioribose-1-phosphate isomerase from Leptospira interrogans serogroup Icterohaemorrhagiae serovar copenhageni (strain Fiocruz L1-130).